The sequence spans 433 residues: Keratin, type I cytoskeletal 17 (433 aa).

The tract at residues 1-24 (MTTTIRQFTSSSSIKGSSGLGGGS) is disordered. Residues 1-83 (MTTTIRQFTS…GGVDGLLAGG (83 aa)) form a head region. Phosphoserine occurs at positions 12 and 13. Residue Lys15 forms a Glycyl lysine isopeptide (Lys-Gly) (interchain with G-Cter in SUMO1); alternate linkage. A Glycyl lysine isopeptide (Lys-Gly) (interchain with G-Cter in SUMO2); alternate cross-link involves residue Lys15. Phosphoserine occurs at positions 25, 32, 34, and 39. Ser44 carries the post-translational modification Phosphoserine; by RPS6KA1. The segment at 84–120 (EKATMQNLNDRLASYLDKVRALEEANTELEVKIRDWY) is coil 1A. The 312-residue stretch at 84–395 (EKATMQNLND…RLLEGEDAHL (312 aa)) folds into the IF rod domain. Thr110 carries the phosphothreonine modification. A linker 1 region spans residues 121–138 (QKQAPGPARDYSAYYQTI). Residues 139-230 (EDLKNKILVA…NHEEEMNALR (92 aa)) form a coil 1B region. The interval 231–250 (GQVGGEINVEMDAAPGVDLS) is linker 12. Residues 251 to 392 (RILSEMRDQY…TYRRLLEGED (142 aa)) form a coil 2 region. Residue Lys278 forms a Glycyl lysine isopeptide (Lys-Gly) (interchain with G-Cter in SUMO2) linkage. Position 279 is a phosphothreonine (Thr279). Phosphoserine is present on Ser323. Positions 393 to 433 (AHLTQYKPKEPVTTRQVRTIVEEVQDGKVISSREQVHQTTR) are tail. Residues Lys399, Lys401, and Lys420 each participate in a glycyl lysine isopeptide (Lys-Gly) (interchain with G-Cter in SUMO1); alternate cross-link. Residues Lys399, Lys401, and Lys420 each participate in a glycyl lysine isopeptide (Lys-Gly) (interchain with G-Cter in SUMO2); alternate cross-link.

It belongs to the intermediate filament family. Heterodimer of a type I and a type II keratin. KRT17 associates with KRT6 isomers (KRT6A or KRT6B). Interacts with TRADD and SFN. In terms of processing, phosphorylation at Ser-44 occurs in a growth- and stress-dependent fashion in skin keratinocytes, it has no effect on filament organization.

The protein localises to the cytoplasm. Functionally, type I keratin involved in the formation and maintenance of various skin appendages, specifically in determining shape and orientation of hair. Required for the correct growth of hair follicles, in particular for the persistence of the anagen (growth) state. Modulates the function of TNF-alpha in the specific context of hair cycling. Regulates protein synthesis and epithelial cell growth through binding to the adapter protein SFN and by stimulating Akt/mTOR pathway. Involved in tissue repair. May be a marker of basal cell differentiation in complex epithelia and therefore indicative of a certain type of epithelial 'stem cells'. Acts as a promoter of epithelial proliferation by acting a regulator of immune response in skin: promotes Th1/Th17-dominated immune environment contributing to the development of basaloid skin tumors. May act as an autoantigen in the immunopathogenesis of psoriasis, with certain peptide regions being a major target for autoreactive T-cells and hence causing their proliferation. This chain is Keratin, type I cytoskeletal 17, found in Rattus norvegicus (Rat).